The chain runs to 37 residues: Large ribosomal subunit protein bL36c (37 aa).

The protein belongs to the bacterial ribosomal protein bL36 family.

It localises to the plastid. The protein localises to the chloroplast. This Dioscorea elephantipes (Elephant's foot yam) protein is Large ribosomal subunit protein bL36c.